The sequence spans 89 residues: Small ribosomal subunit protein uS15 (89 aa).

Belongs to the universal ribosomal protein uS15 family. As to quaternary structure, part of the 30S ribosomal subunit. Forms a bridge to the 50S subunit in the 70S ribosome, contacting the 23S rRNA.

One of the primary rRNA binding proteins, it binds directly to 16S rRNA where it helps nucleate assembly of the platform of the 30S subunit by binding and bridging several RNA helices of the 16S rRNA. Functionally, forms an intersubunit bridge (bridge B4) with the 23S rRNA of the 50S subunit in the ribosome. The sequence is that of Small ribosomal subunit protein uS15 from Thermosynechococcus vestitus (strain NIES-2133 / IAM M-273 / BP-1).